Here is a 181-residue protein sequence, read N- to C-terminus: CD160 antigen (181 aa).

The N-terminal stretch at 1–24 (MLLEPGRGCCALAILLAIVDIQSG) is a signal peptide. In terms of domain architecture, Ig-like V-type spans 25 to 133 (GCINITSSAS…QGHFFSILFT (109 aa)). Asn-28 carries N-linked (GlcNAc...) asparagine glycosylation. 2 disulfide bridges follow: Cys-44/Cys-112 and Cys-61/Cys-68. An N-linked (GlcNAc...) asparagine glycan is attached at Asn-137. Residue Ser-159 is the site of GPI-anchor amidated serine attachment. A propeptide spans 160 to 181 (SGFLQEKVWVMLVTSLVALQAL) (removed in mature form).

Homomultimer; disulfide-linked. Interacts with HLA-G. Interacts with HLA-A2-B2M in complex with an HIV-derived peptide. Interacts with TNFRSF14 (via cysteine-rich domain 1); this interaction is direct. Interacts with LCK and CD247/CD3 zeta chain. In terms of tissue distribution, expression is restricted to functional NK and cytotoxic T lymphocytes. Expressed in viral-specific effector memory and terminally differentiated effector memory CD8+ T cells. Expressed in memory and activated CD4+ T cell subsets (at protein level). Expressed at high levels in intraepithelial lymphocytes (at protein level). Expressed in both alpha-beta and gamma-delta CD8+ T cell subsets (at protein level). Expressed in umbilical vein endothelial cells (at protein level). Expressed in monocytes and at lower levels in B cells. Isoform 3: Expressed exclusively in activated NK cells (at protein level).

Its subcellular location is the cell membrane. It localises to the secreted. Functionally, receptor on immune cells capable to deliver stimulatory or inhibitory signals that regulate cell activation and differentiation. Exists as a GPI-anchored and as a transmembrane form, each likely initiating distinct signaling pathways via phosphoinositol 3-kinase in activated NK cells and via LCK and CD247/CD3 zeta chain in activated T cells. Receptor for both classical and non-classical MHC class I molecules. In the context of acute viral infection, recognizes HLA-C and triggers NK cell cytotoxic activity, likely playing a role in anti-viral innate immune response. On CD8+ T cells, binds HLA-A2-B2M in complex with a viral peptide and provides a costimulatory signal to activated/memory T cells. Upon persistent antigen stimulation, such as occurs during chronic viral infection, may progressively inhibit TCR signaling in memory CD8+ T cells, contributing to T cell exhaustion. On endothelial cells, recognizes HLA-G and controls angiogenesis in immune privileged sites. Receptor or ligand for TNF superfamily member TNFRSF14, participating in bidirectional cell-cell contact signaling between antigen presenting cells and lymphocytes. Upon ligation of TNFRSF14, provides stimulatory signal to NK cells enhancing IFNG production and anti-tumor immune response. On activated CD4+ T cells, interacts with TNFRSF14 and down-regulates CD28 costimulatory signaling, restricting memory and alloantigen-specific immune response. In the context of bacterial infection, acts as a ligand for TNFRSF14 on epithelial cells, triggering the production of antimicrobial proteins and pro-inflammatory cytokines. The soluble GPI-cleaved form, usually released by activated lymphocytes, might play an immune regulatory role by limiting lymphocyte effector functions. This chain is CD160 antigen, found in Homo sapiens (Human).